The following is a 152-amino-acid chain: Cyanate hydratase (152 aa).

Active-site residues include R98, E101, and S124.

The protein belongs to the cyanase family.

The enzyme catalyses cyanate + hydrogencarbonate + 3 H(+) = NH4(+) + 2 CO2. Its function is as follows. Catalyzes the reaction of cyanate with bicarbonate to produce ammonia and carbon dioxide. The sequence is that of Cyanate hydratase from Uncinocarpus reesii (strain UAMH 1704).